A 383-amino-acid chain; its full sequence is Pheromone-regulated membrane protein 10 (383 aa).

At 1–65 (MIVSFGDATT…ILADTNLYPP (65 aa)) the chain is on the cytoplasmic side. Residues 66–86 (WMCVLLYAFCSAMVTPYAFGG) form a helical membrane-spanning segment. Aspartate 87 is a topological domain (extracellular). Residues 88–108 (WVNLAISFFMGLCVGSLQFIL) form a helical membrane-spanning segment. Topologically, residues 109–117 (SQKSYMYSN) are cytoplasmic. Residues 118–138 (VFEISASIVVSFCGRAFGSIP) traverse the membrane as a helical segment. The Extracellular segment spans residues 139 to 141 (RSH). Residues 142 to 162 (ICFGAVTQGSLALILPGYIIL) form a helical membrane-spanning segment. Residues 163–180 (CGALELQSRSLVAGAVRM) lie on the Cytoplasmic side of the membrane. A helical transmembrane segment spans residues 181–201 (FYAIIYSLFLGFGITLGSALF). Residues 202–216 (GWMYHNATNEISCPQ) lie on the Extracellular side of the membrane. The helical transmembrane segment at 217 to 237 (LISPWFRFLFVPAFTISISLL) threads the bilayer. Topologically, residues 238-241 (NQAH) are cytoplasmic. A helical transmembrane segment spans residues 242–262 (ISQLPVMVFISCTGYVVTYWA). Over 263-271 (GKHFANSTE) the chain is Extracellular. A helical membrane pass occupies residues 272–292 (FTAALAAFVIGVLGNLYSRIW). A topological domain (cytoplasmic) is located at residue lysine 293. A helical transmembrane segment spans residues 294–314 (GLAVSAMLPAIFVQVPSGIAS). At 315–352 (QNSLLSGLQSANTIVNANETITTSTSDPSSSMSFGMTM) the chain is on the extracellular side. Residues 353–373 (IQVCVGISVGLFASSLFVYPF) traverse the membrane as a helical segment. The Cytoplasmic portion of the chain corresponds to 374–383 (GKKKTGLFSL).

This sequence belongs to the ThrE exporter (TC 2.A.79) family.

The protein resides in the membrane. In Saccharomyces cerevisiae (strain ATCC 204508 / S288c) (Baker's yeast), this protein is Pheromone-regulated membrane protein 10 (PRM10).